The chain runs to 251 residues: MNFQGKVVLITGAGSGIGKKAAVMFAERGAKVAINDISEEKGKETVELIKSMGGEAAFIFGDVAKDAEQIVKKTVETFGRLDILVNNAGIVPYGNIEETSEEDFDKTMAVNVKGPFLLSKYAVEQMKKQGGGVIVNVSSEAGLIGIPRRCVYSVSKAALLGLTRSLAVDYVDYGIRVNAVCPGTTQSEGLMARVKASPNPEELLKKMTSRIPMKRLGKEEEIAFAILFAACDEAGFMTGSIINIDGGSTAV.

10 to 34 (ITGAGSGIGKKAAVMFAERGAKVAI) serves as a coordination point for NADP(+). Substrate is bound at residue Ser-139. The Proton acceptor role is filled by Tyr-152.

Belongs to the short-chain dehydrogenases/reductases (SDR) family.

This is an uncharacterized protein from Thermotoga maritima (strain ATCC 43589 / DSM 3109 / JCM 10099 / NBRC 100826 / MSB8).